The chain runs to 536 residues: Phosphoenolpyruvate carboxykinase (ATP) (536 aa).

Residues arginine 61, tyrosine 195, and lysine 201 each coordinate substrate. ATP is bound by residues lysine 201, histidine 220, and 236–244 (GLSGTGKTT). Residues lysine 201 and histidine 220 each coordinate Mn(2+). Residue aspartate 257 participates in Mn(2+) binding. Residues glutamate 285, arginine 322, and threonine 447 each coordinate ATP. Arginine 322 serves as a coordination point for substrate.

This sequence belongs to the phosphoenolpyruvate carboxykinase (ATP) family. Requires Mn(2+) as cofactor.

The protein localises to the cytoplasm. It catalyses the reaction oxaloacetate + ATP = phosphoenolpyruvate + ADP + CO2. It functions in the pathway carbohydrate biosynthesis; gluconeogenesis. Involved in the gluconeogenesis. Catalyzes the conversion of oxaloacetate (OAA) to phosphoenolpyruvate (PEP) through direct phosphoryl transfer between the nucleoside triphosphate and OAA. This chain is Phosphoenolpyruvate carboxykinase (ATP), found in Rhizobium etli (strain ATCC 51251 / DSM 11541 / JCM 21823 / NBRC 15573 / CFN 42).